A 222-amino-acid polypeptide reads, in one-letter code: MQTWTDVIGSEKEQDYFKATLATVRSEREAGKVIYPPATDVFNAFKLTELDQVKVVILGQDPYHGPNQAHGLCFSVLPGVRTPPSLVNIYKEMQRDLPGFVTPSHGFLESWAKQGVLLLNTVLTVQAGQAHSHAHLGWETFTDRVIEQINASCQGVVFLLWGAHAQKKGRFIDRQRHHVLSAPHPSPLSAHRGFIGCGHFSETNRLLSQQGMSPINWHSVCE.

The active-site Proton acceptor is the Asp61.

It belongs to the uracil-DNA glycosylase (UDG) superfamily. UNG family.

It localises to the cytoplasm. The catalysed reaction is Hydrolyzes single-stranded DNA or mismatched double-stranded DNA and polynucleotides, releasing free uracil.. Excises uracil residues from the DNA which can arise as a result of misincorporation of dUMP residues by DNA polymerase or due to deamination of cytosine. This chain is Uracil-DNA glycosylase, found in Aeromonas hydrophila subsp. hydrophila (strain ATCC 7966 / DSM 30187 / BCRC 13018 / CCUG 14551 / JCM 1027 / KCTC 2358 / NCIMB 9240 / NCTC 8049).